We begin with the raw amino-acid sequence, 231 residues long: Octanoyltransferase (231 aa).

Positions 49 to 227 (PHLPEAVWLL…ALAARFHLAW (179 aa)) constitute a BPL/LPL catalytic domain. Residues 91-98 (RGGEVTHH), 158-160 (AIG), and 171-173 (GLA) contribute to the substrate site. Cys189 (acyl-thioester intermediate) is an active-site residue.

Belongs to the LipB family.

It is found in the cytoplasm. It catalyses the reaction octanoyl-[ACP] + L-lysyl-[protein] = N(6)-octanoyl-L-lysyl-[protein] + holo-[ACP] + H(+). It functions in the pathway protein modification; protein lipoylation via endogenous pathway; protein N(6)-(lipoyl)lysine from octanoyl-[acyl-carrier-protein]: step 1/2. Catalyzes the transfer of endogenously produced octanoic acid from octanoyl-acyl-carrier-protein onto the lipoyl domains of lipoate-dependent enzymes. Lipoyl-ACP can also act as a substrate although octanoyl-ACP is likely to be the physiological substrate. The chain is Octanoyltransferase from Parasynechococcus marenigrum (strain WH8102).